The following is a 758-amino-acid chain: CRISPR system single-strand-specific deoxyribonuclease Cas10/Csm1 (subtype III-A) (758 aa).

The interval 1–82 (MKKEKIDLFY…TYIADNIASG (82 aa)) is HD domain. In terms of domain architecture, GGDEF spans 509 to 647 (KRLAVVRLDV…EKDSISLFSS (139 aa)).

This sequence belongs to the CRISPR-associated Cas10/Csm1 family. As to quaternary structure, part of the Csm effector complex that includes at least Cas10(1), Csm2(3), Csm3(5), Csm4(1), Csm5(1) and mature crRNA. The Csm complex is elongated and slightly twisted with a maximal length of 215 Angstroms and a diameter of 75-80 Angstroms. It has been modeled to have a central protein filamant of Csm3 subunits along which the dsRNA helix of paired crRNA and target RNA binds. The filament is capped at one end by Cas10 and Csm4 and at the other end by Csm5; ssDNA is thought to bind to the N-terminal HD domain of Cas10. Csm with a precursor crRNA does not include Csm5, while Cas6, the enzyme probably involved in pre-crRNA processing, is found associated with a subset of the Csm complex. The cofactor is a divalent metal cation.

The catalysed reaction is 6 ATP = cyclic hexaadenylate + 6 diphosphate. SsDNase activity is activated by target RNA binding to the Csm-crRNA complex and is inhibited by EDTA. Functionally, CRISPR (clustered regularly interspaced short palindromic repeat) is an adaptive immune system that provides protection against mobile genetic elements (viruses, transposable elements and conjugative plasmids). CRISPR clusters contain spacers, sequences complementary to antecedent mobile elements, and target invading nucleic acids. CRISPR clusters are transcribed and processed into CRISPR RNA (crRNA). The type III-A Csm effector complex binds crRNA and acts as a crRNA-guided RNase, DNase and cyclic oligoadenylate synthase; binding of target RNA cognate to the crRNA is required for all activities. In a heterologous host this Csm effector complex restricts ssRNA phage MS2, suggesting it may target RNA viruses in vivo. In terms of biological role, csm functions as a non-specific ssDNase. Base-pairing between crRNA and target RNA to form a ternary Csm complex activates a ssDNase activity; target RNA cleavage suppresses the ssDNase, a temporal control that prevents uncontrolled DNA degradation. Viral RNA transcripts probably tether the Csm complex to the viral genome, recruiting Cas10 ssDNA activity which is able to degrade DNA in the transcription bubble, spatially controlling the DNase activity. This subunit has a weak ssDNase activity that is dramatically activated by the ternary Csm effector complex (the crRNA, Cas proteins and a cognate target ssRNA). Target RNA and ssDNA are cleaved simultaneously, although RNase activity (of Csm3) is much faster. RNA cleavage by Csm3 is not required for ssDNase activity as Csm complex with inactive Csm3 still has ssDNase activity; however as the cleaved target RNA products dissociate away ssDNase activity decreases. Self-recognition, with subsequent repression of the ssDNase activity, occurs when the 5' handle of the crRNA bases pairs with the 3' flanking sequence of the target RNA (which would occur if the CRISPR locus were transcribed as an anti-pre-crRNA). This protein has low activity on dsDNA which is not stimulated by the Csm complex. Its function is as follows. This subunit is a single-strand-specific deoxyribonuclease (ssDNase) which digests both linear and circular ssDNA; it has both exo- and endonuclease activity. Functionally, when associated with the ternary Csm effector complex (the crRNA, Cas proteins and a cognate target ssRNA) synthesizes cyclic oligoadenylates (cOA) from ATP, producing cyclic triadenylate (cA3) up to cyclic hexaadenylate (cA6), which is the active cOA. The enzyme is also able to cyclize pppA3 up to pppA6. cOAs are second messengers that induce an antiviral state important for defense against invading nucleic acids. Synthesis of cOA can occur with AMP plus ATP, 2'dATP or 3'dATP (but no other nucleotides), and requires a free 3'-OH ribose moiety. This Streptococcus thermophilus protein is CRISPR system single-strand-specific deoxyribonuclease Cas10/Csm1 (subtype III-A).